A 292-amino-acid polypeptide reads, in one-letter code: Probable 2-(5''-triphosphoribosyl)-3'-dephosphocoenzyme-A synthase (292 aa).

It belongs to the CitG/MdcB family.

The catalysed reaction is 3'-dephospho-CoA + ATP = 2'-(5''-triphospho-alpha-D-ribosyl)-3'-dephospho-CoA + adenine. The sequence is that of Probable 2-(5''-triphosphoribosyl)-3'-dephosphocoenzyme-A synthase from Shigella boydii serotype 18 (strain CDC 3083-94 / BS512).